A 133-amino-acid polypeptide reads, in one-letter code: Small ribosomal subunit protein uS8 (133 aa).

This sequence belongs to the universal ribosomal protein uS8 family. In terms of assembly, part of the 30S ribosomal subunit. Contacts proteins S5 and S12.

One of the primary rRNA binding proteins, it binds directly to 16S rRNA central domain where it helps coordinate assembly of the platform of the 30S subunit. The sequence is that of Small ribosomal subunit protein uS8 from Prochlorococcus marinus (strain MIT 9301).